A 318-amino-acid polypeptide reads, in one-letter code: Ribose-phosphate pyrophosphokinase 1 (318 aa).

Residues 43 to 45 and 102 to 103 contribute to the ATP site; these read DGE and RQ. Positions 136 and 176 each coordinate Mg(2+). Lys199 is a catalytic residue. D-ribose 5-phosphate-binding positions include Arg201, Asp225, and 229-233; that span reads DTAGT.

It belongs to the ribose-phosphate pyrophosphokinase family. Class I subfamily. In terms of assembly, homohexamer. It depends on Mg(2+) as a cofactor.

It localises to the cytoplasm. It carries out the reaction D-ribose 5-phosphate + ATP = 5-phospho-alpha-D-ribose 1-diphosphate + AMP + H(+). Its pathway is metabolic intermediate biosynthesis; 5-phospho-alpha-D-ribose 1-diphosphate biosynthesis; 5-phospho-alpha-D-ribose 1-diphosphate from D-ribose 5-phosphate (route I): step 1/1. In terms of biological role, involved in the biosynthesis of the central metabolite phospho-alpha-D-ribosyl-1-pyrophosphate (PRPP) via the transfer of pyrophosphoryl group from ATP to 1-hydroxyl of ribose-5-phosphate (Rib-5-P). The polypeptide is Ribose-phosphate pyrophosphokinase 1 (Listeria innocua serovar 6a (strain ATCC BAA-680 / CLIP 11262)).